The sequence spans 349 residues: UDP-glucose 4-epimerase (349 aa).

NAD(+)-binding positions include 10-12, 31-35, 66-67, and Lys-92; these read GFI, DNFAN, and DV. Position 132-134 (132-134) interacts with substrate; it reads SAT. The active-site Proton acceptor is Tyr-158. Residues Lys-162 and Tyr-186 each contribute to the NAD(+) site. Residues 186 to 188, 207 to 209, 225 to 227, Arg-240, and 303 to 306 each bind substrate; these read YFN, NNL, TIY, and RPGD.

This sequence belongs to the NAD(P)-dependent epimerase/dehydratase family. NAD(+) serves as cofactor. Expressed in gonads, vulva, intestine, hypdermis and nervous system.

The enzyme catalyses UDP-alpha-D-glucose = UDP-alpha-D-galactose. The catalysed reaction is UDP-N-acetyl-alpha-D-glucosamine = UDP-N-acetyl-alpha-D-galactosamine. It functions in the pathway carbohydrate metabolism; galactose metabolism. In terms of biological role, catalyzes two distinct but analogous reactions: the reversible epimerization of UDP-glucose to UDP-galactose and the reversible epimerization of UDP-N-acetylglucosamine to UDP-N-acetylgalactosamine. The reaction with UDP-Gal plays a critical role in the Leloir pathway of galactose catabolism in which galactose is converted to the glycolytic intermediate glucose 6-phosphate. It contributes to the catabolism of dietary galactose and enables the endogenous biosynthesis of both UDP-Gal and UDP-GalNAc when exogenous sources are limited. Both UDP-sugar interconversions are important for the synthesis of glycoproteins and glycolipids. The sequence is that of UDP-glucose 4-epimerase from Caenorhabditis elegans.